Here is a 710-residue protein sequence, read N- to C-terminus: ARM REPEAT PROTEIN INTERACTING WITH ABF2 (710 aa).

The interval 1 to 35 (MDQQPERREGRSFPERKGQKRKLEEGAAAVEDREI) is disordered. ARM repeat units follow at residues 85–127 (EDLV…EKGS), 138–185 (PEYQ…NLAH), 188–227 (SSIK…TLAF), 230–269 (DDNK…NLVH), 272–311 (PHIK…QFAS), 314–353 (SDCK…RLAQ), 355–394 (AHNQ…GLAD), 429–468 (LKRL…HLCS), and 470–509 (EDQR…KLAN). Residues 541–608 (SDVTFLVEGR…IYTGSVDITN (68 aa)) form the BTB domain.

As to quaternary structure, interacts with ABF2. Interacts with DUF7/AIP1. In terms of tissue distribution, detected in embryos and most of the vegetative and reproductive organs.

The protein resides in the nucleus. Its pathway is protein modification; protein ubiquitination. In terms of biological role, may act as a substrate-specific adapter of an E3 ubiquitin-protein ligase complex (CUL3-RBX1-BTB) which mediates the ubiquitination and subsequent proteasomal degradation of target proteins. Acts as a positive regulator of ABA response via the modulation of the transcriptional activity of ABF2, a transcription factor which controls ABA-dependent gene expression via the G-box-type ABA-responsive elements. Negative regulator of seed germination and young seedling growth. This is ARM REPEAT PROTEIN INTERACTING WITH ABF2 (ARIA) from Arabidopsis thaliana (Mouse-ear cress).